A 470-amino-acid chain; its full sequence is 5-hydroxytryptamine receptor 2A (470 aa).

The Extracellular portion of the chain corresponds to 1–80 (MDILCEENTS…LQEKNWSALL (80 aa)). The N-linked (GlcNAc...) asparagine glycan is linked to Asn38. Residues 81 to 97 (TAVVIILTIAGNILVIM) form a helical membrane-spanning segment. Topologically, residues 98–111 (AVSLEKKLQNATNY) are cytoplasmic. The chain crosses the membrane as a helical span at residues 112-137 (FLMSLAIADMLLGFLVMPVSTLTILY). At 138–146 (GYRWPLPSK) the chain is on the extracellular side. A helical membrane pass occupies residues 147–171 (LCAVWIYLDVLFSTASIMHLCAISL). Residues Cys148 and Cys227 are joined by a disulfide bond. Asp155 lines the serotonin pocket. Residues 172 to 174 (DRY) carry the DRY motif; important for ligand-induced conformation changes motif. At 172–191 (DRYVAIQNPIHHSRFNSRTK) the chain is on the cytoplasmic side. The helical transmembrane segment at 192 to 215 (AFLKIIAVWTISVGISMPIPVFGL) threads the bilayer. Over 216–232 (QDDSKVFKEGSCLLADE) the chain is Extracellular. Residues 233-258 (NFVLIGSFVAFFIPLTIMVITYFLTI) form a helical membrane-spanning segment. Residues 259–321 (KSLQKEATLC…QSISNEQKAC (63 aa)) are Cytoplasmic-facing. Position 280 is a phosphoserine (Ser280). Residues 322–347 (KVLGIVFFLFVVMWCPFFITNIMAVI) traverse the membrane as a helical segment. Asn342 is a binding site for serotonin. An intrachain disulfide couples Cys348 to Cys352. Over 348-355 (CKESCNRD) the chain is Extracellular. Residues 356 to 381 (VIEALLNVFVWIGYLSSAVNPLVYTL) form a helical membrane-spanning segment. The NPxxY motif; important for ligand-induced conformation changes and signaling motif lies at 375–379 (NPLVY). Over 382-470 (FNKTYRSAFS…NTVNEKVSCV (89 aa)) the chain is Cytoplasmic. The disordered stretch occupies residues 424-470 (QMGPKKNSKKDDKTTDNDCTMVALGKEHPEDAPADSSNTVNEKVSCV). Positions 458-470 (DSSNTVNEKVSCV) are enriched in polar residues. The PDZ-binding signature appears at 468-470 (SCV).

The protein belongs to the G-protein coupled receptor 1 family. Interacts (via C-terminus) with MPDZ and PATJ. May interact (via C-terminus) with MPP3, PRDX6, DLG4, DLG1, CASK, APBA1 and MAGI2. Interacts with GRM2 and DRD2; this may affect signaling.

The protein localises to the cell membrane. It is found in the cell projection. Its subcellular location is the dendrite. It localises to the axon. The protein resides in the cytoplasmic vesicle. The protein localises to the membrane. It is found in the caveola. Its subcellular location is the presynapse. With respect to regulation, G-protein coupled receptor activity is regulated by lipids: oleamide increases HTR2A-mediated activity. Its function is as follows. G-protein coupled receptor for 5-hydroxytryptamine (serotonin). Also functions as a receptor for various drugs and psychoactive substances, including mescaline, psilocybin, 1-(2,5-dimethoxy-4-iodophenyl)-2-aminopropane (DOI) and lysergic acid diethylamide (LSD). Ligand binding causes a conformation change that triggers signaling via guanine nucleotide-binding proteins (G proteins) and modulates the activity of downstream effectors. HTR2A is coupled to G(q)/G(11) G alpha proteins and activates phospholipase C-beta, releasing diacylglycerol (DAG) and inositol 1,4,5-trisphosphate (IP3) second messengers that modulate the activity of phosphatidylinositol 3-kinase and promote the release of Ca(2+) ions from intracellular stores, respectively. Beta-arrestin family members inhibit signaling via G proteins and mediate activation of alternative signaling pathways. Affects neural activity, perception, cognition and mood. Plays a role in the regulation of behavior, including responses to anxiogenic situations and psychoactive substances. Plays a role in intestinal smooth muscle contraction, and may play a role in arterial vasoconstriction. This chain is 5-hydroxytryptamine receptor 2A (HTR2A), found in Bos taurus (Bovine).